The primary structure comprises 119 residues: DNA-binding protein Maeo_0998 (119 aa).

A compositionally biased stretch (basic and acidic residues) spans 1–11 (MDIEEIKRQKM). The tract at residues 1-36 (MDIEEIKRQKMMELQQQQAQGAPNPEEIQQQQEQER) is disordered. Positions 15–32 (QQQQAQGAPNPEEIQQQQ) are enriched in low complexity.

Belongs to the PDCD5 family.

The sequence is that of DNA-binding protein Maeo_0998 from Methanococcus aeolicus (strain ATCC BAA-1280 / DSM 17508 / OCM 812 / Nankai-3).